The sequence spans 56 residues: Large ribosomal subunit protein bL32 (56 aa).

The tract at residues 1-27 (MAVQQNKKSRSRRDMRRSHDALTTAAV) is disordered. The span at 7–16 (KKSRSRRDMR) shows a compositional bias: basic residues.

It belongs to the bacterial ribosomal protein bL32 family.

The protein is Large ribosomal subunit protein bL32 of Actinobacillus pleuropneumoniae serotype 7 (strain AP76).